A 308-amino-acid polypeptide reads, in one-letter code: Elongation factor Ts (308 aa).

Positions 80 to 83 (TDFV) are involved in Mg(2+) ion dislocation from EF-Tu.

This sequence belongs to the EF-Ts family.

It localises to the cytoplasm. Its function is as follows. Associates with the EF-Tu.GDP complex and induces the exchange of GDP to GTP. It remains bound to the aminoacyl-tRNA.EF-Tu.GTP complex up to the GTP hydrolysis stage on the ribosome. This is Elongation factor Ts from Verminephrobacter eiseniae (strain EF01-2).